Reading from the N-terminus, the 114-residue chain is UPF0102 protein HPSH_02690 (114 aa).

It belongs to the UPF0102 family.

This Helicobacter pylori (strain Shi470) protein is UPF0102 protein HPSH_02690.